The primary structure comprises 512 residues: Lysine--tRNA ligase (512 aa).

2 residues coordinate Mg(2+): Glu-408 and Glu-415.

Belongs to the class-II aminoacyl-tRNA synthetase family. In terms of assembly, homodimer. Requires Mg(2+) as cofactor.

The protein localises to the cytoplasm. It catalyses the reaction tRNA(Lys) + L-lysine + ATP = L-lysyl-tRNA(Lys) + AMP + diphosphate. The chain is Lysine--tRNA ligase from Prochlorococcus marinus (strain MIT 9515).